A 133-amino-acid chain; its full sequence is C-C motif chemokine 21b (133 aa).

The first 23 residues, 1 to 23, serve as a signal peptide directing secretion; sequence MAQMMTLSLLSLVLALCIPWTQG. Cystine bridges form between Cys-31/Cys-57, Cys-32/Cys-75, and Cys-103/Cys-122. The tract at residues 87–133 is disordered; it reads MRRLDQPPAPGKQSPGCRKNRGTSKSGKKGKGSKGCKRTEQTQPSRG. The tract at residues 98-133 is C-terminal basic extension; that stretch reads KQSPGCRKNRGTSKSGKKGKGSKGCKRTEQTQPSRG. The span at 104-122 shows a compositional bias: basic residues; sequence RKNRGTSKSGKKGKGSKGC.

This sequence belongs to the intercrine beta (chemokine CC) family. As to quaternary structure, binds to CCR7 and to CXCR3. Interacts with PDPN; relocalizes PDPN to the basolateral membrane. Interacts with GPR174. In terms of tissue distribution, expressed strongly in lung, spleen, thymus, peripheral and mesentric lymph nodes. Also expressed in the testis, kidney, liver, and heart.

The protein localises to the secreted. Inhibits hemopoiesis and stimulates chemotaxis. Chemotactic in vitro for thymocytes and activated T-cells, but not for B-cells, macrophages, or neutrophils. Potent mesangial cell chemoattractant. Shows preferential activity towards naive T-cells. May play a role in mediating homing of lymphocytes to secondary lymphoid organs. This chain is C-C motif chemokine 21b (Ccl21b), found in Mus musculus (Mouse).